Reading from the N-terminus, the 149-residue chain is Large ribosomal subunit protein bL9 (149 aa).

It belongs to the bacterial ribosomal protein bL9 family.

Binds to the 23S rRNA. This chain is Large ribosomal subunit protein bL9, found in Tolumonas auensis (strain DSM 9187 / NBRC 110442 / TA 4).